The primary structure comprises 568 residues: MSPPQKPPKLRHACNECHASKVRCSGERTGCRRCVYNQQKCTYSVSMVGKVQGHRRRAAVTGTAPRSGAQSLNINTSTEIISVANADVIHDEANGNDLNSKPNDVPVESSEGITSSPAHCSILPGGNNGKVTTSSAPENFSTSLESIDTSSLETPIIEHEFSWDFSSDERADALNSLALENPSNVDSMKNPEYGDFEYDFSIHEVPATSSSQDDSRSPKRQIADPIPISPVPKFYPSRKRTHSDLSEKQAQHAQNDLRWRSQSQSYKRPTISTQHHNHSFSREMYEYPESSASFDADCSFDRGSTSHSTTSQTNMNHQSMNRIPQTTQSNRISFTAQSHYMVSSMSSSVTHYEASWRFTSKCFIIISKLQKLLRDSSSLSLDVILATNKSAISELAQMFDSTLASNTARSTSPEDFFSIHSEIQPSNTCDTSLSTDFIPLMVYMIALKCIHDLYSQACFIFTQDDHRSRSLSTPSPRNTPSTSNSPFSNPFGLPQLDFGTFKIDIADQRRLFSEIIARELGNCLSACTRLRSYFLMQPGDISTSTGLIEEMFLGIEEGLQSMIKRVKI.

A DNA-binding region (zn(2)-C6 fungal-type) is located at residues 14–41 (CNECHASKVRCSGERTGCRRCVYNQQKC). Disordered stretches follow at residues 92 to 114 (EANGNDLNSKPNDVPVESSEGIT), 207 to 278 (ATSS…HHNH), and 467 to 490 (RSRSLSTPSPRNTPSTSNSPFSNP). Over residues 242–259 (HSDLSEKQAQHAQNDLRW) the composition is skewed to basic and acidic residues. A compositionally biased stretch (polar residues) spans 260 to 274 (RSQSQSYKRPTISTQ). The span at 470 to 490 (SLSTPSPRNTPSTSNSPFSNP) shows a compositional bias: low complexity.

It is found in the nucleus. Transcription factor that probably regulates the gene clusters that mediates the biosynthesis of botcinin acid and its botcinin derivatives, acetate-derived polyketides that contribute to virulence when combined with the sesquiterpene botrydial. Botcinin acid and its derivatives have been shown to induce chlorosis and necrosis during host plant infection, but also have antifungal activities. This Botryotinia fuckeliana (strain B05.10) (Noble rot fungus) protein is C6 finger domain transcription factor BOA13.